Here is a 300-residue protein sequence, read N- to C-terminus: Cation-efflux pump FieF (300 aa).

4 helical membrane passes run 12–32 (AAIA…FAWW), 39–59 (ILAA…NLLV), 82–102 (AALA…LTGI), and 114–134 (PGVG…LVTF). Residues aspartate 45 and aspartate 49 each contribute to the Zn(2+) site. Histidine 153 and aspartate 157 together coordinate Zn(2+). The helical transmembrane segment at 164-184 (ILVALGLAWYGWHRADALFAL) threads the bilayer.

It belongs to the cation diffusion facilitator (CDF) transporter (TC 2.A.4) family. FieF subfamily. In terms of assembly, homodimer.

It localises to the cell inner membrane. The enzyme catalyses Zn(2+)(in) + H(+)(out) = Zn(2+)(out) + H(+)(in). It carries out the reaction Cd(2+)(in) + H(+)(out) = Cd(2+)(out) + H(+)(in). The catalysed reaction is Fe(2+)(in) + H(+)(out) = Fe(2+)(out) + H(+)(in). Its function is as follows. Divalent metal cation transporter which exports Zn(2+), Cd(2+) and possibly Fe(2+). May be involved in zinc and iron detoxification by efflux. This Citrobacter koseri (strain ATCC BAA-895 / CDC 4225-83 / SGSC4696) protein is Cation-efflux pump FieF.